Reading from the N-terminus, the 269-residue chain is Gene 51 glycoprotein (269 aa).

Residues Asn53, Asn58, Asn74, and Asn78 are each glycosylated (N-linked (GlcNAc...) asparagine; by host). Disordered regions lie at residues 67-87 (LSTSPMHNATSNTSYSQTTPY) and 103-137 (MLNSTPNKPLSSTKLTPKSQSSSQSTKTTKQASKN). Residues 76-87 (TSNTSYSQTTPY) show a composition bias toward low complexity. Positions 103–112 (MLNSTPNKPL) are enriched in polar residues. The segment covering 113–136 (SSTKLTPKSQSSSQSTKTTKQASK) has biased composition (low complexity). Asn137, Asn161, Asn170, and Asn191 each carry an N-linked (GlcNAc...) asparagine; by host glycan.

This is Gene 51 glycoprotein (51) from Saimiriine herpesvirus 2 (strain 11) (SaHV-2).